Reading from the N-terminus, the 425-residue chain is MALTGYSWLLLSATFLNVGAEISITLEPAQPSEGDNVTLVVHGLSGELLAYSWYAGPTLSVSYLVASYIVSTGDETPGPAHTGREAVRPDGSLDIQGILPRHSGTYILQTFNRQLQTEVGYGHVQVHEILAQPTVLANSTALVERRDTLRLMCSSPSPTAEVRWFFNGGALPVALRLGLSPDGRVLARHGIRREEAGAYQCEVWNPVSVSRSEPINLTVYFGPERVAILQDSTTRTGCTIKVDFNTSLTLWCVSRSCPEPEYVWTFNGQALKNGQDHLNISSMTAAQEGTYTCIAKNTKTLLSGSASVVVKLSAAAVATMIVPVPTKPTEGQDVTLTVQGYPKDLLVYAWYRGPASEPNRLLSQLPSGTWIAGPAHTGREVGFPNCSLLVQKLNLTDTGRYTLKTVTVQGKTETLEVELQVAPLG.

A signal peptide spans 1–20; it reads MALTGYSWLLLSATFLNVGA. N-linked (GlcNAc...) asparagine glycosylation is present at N36. Ig-like C2-type domains follow at residues 133 to 218 and 223 to 309; these read PTVL…INLT and PERV…ASVV. C153 and C201 are oxidised to a cystine. N216 carries N-linked (GlcNAc...) asparagine glycosylation. C252 and C293 are oxidised to a cystine. Residue N394 is glycosylated (N-linked (GlcNAc...) asparagine).

It belongs to the immunoglobulin superfamily. CEA family. In terms of assembly, homooligomer; can for homodimers and homotetramers. Interacts with TECTA and TECTB.

The protein localises to the secreted. Required for proper hearing, plays a role in maintaining the integrity of the tectorial membrane. This Homo sapiens (Human) protein is Cell adhesion molecule CEACAM16.